The primary structure comprises 1015 residues: Formate dehydrogenase, nitrate-inducible, major subunit (1015 aa).

Positions 1–33 form a signal peptide, tat-type signal; that stretch reads MDVSRRQFFKICAGGMAGTTVAALGFAPKQALA. The 64-residue stretch at 43 to 106 folds into the 4Fe-4S Mo/W bis-MGD-type domain; sequence AKEIRNTCTY…GLLDYVNSEN (64 aa). The [4Fe-4S] cluster site is built by Cys-50, Cys-53, Cys-57, and Cys-92. Sec-196 lines the Mo-bis(molybdopterin guanine dinucleotide) pocket. A non-standard amino acid (selenocysteine) is located at residue Sec-196.

The protein belongs to the prokaryotic molybdopterin-containing oxidoreductase family. Trimer of heterotrimers, consisting of subunits alpha, beta and gamma. The cofactor is Mo-bis(molybdopterin guanine dinucleotide). [4Fe-4S] cluster serves as cofactor. Post-translationally, exported by the Tat system. The position of the signal peptide cleavage has not been experimentally proven.

It localises to the periplasm. The catalysed reaction is a quinone + formate + H(+) = a quinol + CO2. In terms of biological role, formate dehydrogenase allows E.coli to use formate as major electron donor during anaerobic respiration, when nitrate is used as electron acceptor. The alpha subunit FdnG contains the formate oxidation site. Electrons are transferred from formate to menaquinone in the gamma subunit (FdnI), through the 4Fe-4S clusters in the beta subunit (FdnH). Formate dehydrogenase-N is part of a system that generates proton motive force, together with the dissimilatory nitrate reductase (Nar). This chain is Formate dehydrogenase, nitrate-inducible, major subunit (fdnG), found in Escherichia coli (strain K12).